A 504-amino-acid polypeptide reads, in one-letter code: MEEFQVYLELNRSRRHDFLYPLIFREYIYALAHDHGLNKSMIFLENQGYGNKFSSLIVKRLIIRMDQQNHLIISANDSNQNPFFGHKKNLYSQMISAGFAVIVEIPFSLRLVSYSQGEEVAKSHNLQSIHSIFPFLEDKFSHLNYVLDVLIPYPIHLEILVQALRYWVKDASSLHLLRFSLYEYCNLKSFITPKKSISIFNPRLFFFLYNSHACEYESIFLFLRNQSSHLRSTSSGVFLERIYFYGKIDYLVEVFSNDFQNNLWLFKDPFTHFIRYQGKAILASKDTSLLMNKWKYYFVDLWQYYFYMWSQSGRFRINQLSKYSLDFLGYLSSVRLNPSVVRSQMLENSFIIDNAMKKLDTRIPIISLIGSLSKAKFCNTLGHPISKPTWADSSDSDIIDRFVRICRNLSHYHSGSSKKKSLYRIKYILRFSCVKTLARKHKSTVRAFLKRLGSEFLEEFFTETEEEHFFSLIFPRVFFTSRKLYRGRIWYLDIICINALVNHE.

This sequence belongs to the intron maturase 2 family. MatK subfamily.

It is found in the plastid. It localises to the chloroplast. Its function is as follows. Usually encoded in the trnK tRNA gene intron. Probably assists in splicing its own and other chloroplast group II introns. The protein is Maturase K of Pachira aquatica (Guiana chestnut).